Consider the following 539-residue polypeptide: Acid-sensing ion channel 4-A (539 aa).

Residues 1–68 lie on the Cytoplasmic side of the membrane; the sequence is MPIEFVCKIK…SGRLGVRQTL (68 aa). Residues 69–89 form a helical membrane-spanning segment; it reads WALAFLVSLALFLYQAAKCAI. Residues 90–432 are Extracellular-facing; the sequence is SYLEHPHVTA…EQKKAYDVAG (343 aa). 2 disulfide bridges follow: cysteine 116–cysteine 200 and cysteine 178–cysteine 185. 6 N-linked (GlcNAc...) asparagine glycosylation sites follow: asparagine 136, asparagine 165, asparagine 179, asparagine 184, asparagine 206, and asparagine 241. Disulfide bonds link cysteine 294–cysteine 369, cysteine 313–cysteine 365, cysteine 317–cysteine 363, cysteine 326–cysteine 347, and cysteine 328–cysteine 340. The N-linked (GlcNAc...) asparagine glycan is linked to asparagine 370. A helical membrane pass occupies residues 433-453; the sequence is LLGDIGGQMGLFIGASVLTIL. Residues 446–448 carry the GAS motif; ion selectivity filter motif; that stretch reads GAS. Topologically, residues 454–539 are cytoplasmic; the sequence is EILDYVYEVI…HHRVSEDFAC (86 aa). Residues 474–494 form a disordered region; sequence QRDDKKQTQQQQQASTVATVN.

It belongs to the amiloride-sensitive sodium channel (TC 1.A.6) family. ASIC4 subfamily. As to quaternary structure, homotrimer. Heterotrimer; with other ASIC proteins producing functional channels. Expressed in central nervous system.

It is found in the cell membrane. It carries out the reaction Na(+)(in) = Na(+)(out). Its activity is regulated as follows. Inhibited by the diuretic drug amiloride. Its function is as follows. Could form pH-gated trimeric sodium channels and function as a postsynaptic excitatory receptors in the nervous system. This chain is Acid-sensing ion channel 4-A, found in Danio rerio (Zebrafish).